The following is a 167-amino-acid chain: Probable membrane-bound hydrogenase subunit mbhJ (167 aa).

[4Fe-4S] cluster-binding residues include Cys-35, Cys-38, Cys-102, and Cys-132.

This sequence belongs to the complex I 20 kDa subunit family. The membrane-bound hydrogenase complex is composed of MbhK and MbhL, but may also contain MbhJ. [4Fe-4S] cluster serves as cofactor.

It is found in the cell membrane. It carries out the reaction H2 + 2 oxidized [2Fe-2S]-[ferredoxin] = 2 reduced [2Fe-2S]-[ferredoxin] + 2 H(+). With respect to regulation, inhibited by 0.1 mM Cu(2+). In terms of biological role, probable subunit of a hydrogen-evolving hydrogenase that utilizes protons both as a substrate for hydrogen production and proton translocation. Acts by coupling the redox reaction via ferredoxin and iron-sulfur (Fe-S) clusters to proton translocation across the membrane, thereby conserving the redox energy in a proton gradient. The sequence is that of Probable membrane-bound hydrogenase subunit mbhJ from Pyrococcus furiosus (strain ATCC 43587 / DSM 3638 / JCM 8422 / Vc1).